The primary structure comprises 87 residues: DNA-directed RNA polymerase subunit omega (87 aa).

It belongs to the RNA polymerase subunit omega family. The RNAP catalytic core consists of 2 alpha, 1 beta, 1 beta' and 1 omega subunit. When a sigma factor is associated with the core the holoenzyme is formed, which can initiate transcription.

It carries out the reaction RNA(n) + a ribonucleoside 5'-triphosphate = RNA(n+1) + diphosphate. Promotes RNA polymerase assembly. Latches the N- and C-terminal regions of the beta' subunit thereby facilitating its interaction with the beta and alpha subunits. In Leifsonia xyli subsp. xyli (strain CTCB07), this protein is DNA-directed RNA polymerase subunit omega.